A 279-amino-acid polypeptide reads, in one-letter code: NADPH-dependent 7-cyano-7-deazaguanine reductase (279 aa).

Position 86-88 (Ile86–Ser88) interacts with substrate. Ser88–Lys89 provides a ligand contact to NADPH. Cys187 functions as the Thioimide intermediate in the catalytic mechanism. The active-site Proton donor is Asp194. His226–Glu227 is a binding site for substrate. Residue Arg255–Gly256 participates in NADPH binding.

This sequence belongs to the GTP cyclohydrolase I family. QueF type 2 subfamily. As to quaternary structure, homodimer.

It localises to the cytoplasm. It carries out the reaction 7-aminomethyl-7-carbaguanine + 2 NADP(+) = 7-cyano-7-deazaguanine + 2 NADPH + 3 H(+). It participates in tRNA modification; tRNA-queuosine biosynthesis. Catalyzes the NADPH-dependent reduction of 7-cyano-7-deazaguanine (preQ0) to 7-aminomethyl-7-deazaguanine (preQ1). This Haemophilus influenzae (strain PittGG) protein is NADPH-dependent 7-cyano-7-deazaguanine reductase.